Consider the following 92-residue polypeptide: cAMP-dependent protein kinase inhibitor beta (92 aa).

The segment at 1 to 26 is disordered; sequence MGGGTSPEAQQDSVMRTDSSEMTDVE. The span at 7-26 shows a compositional bias: polar residues; sequence PEAQQDSVMRTDSSEMTDVE. Ser56 carries the phosphoserine modification. The span at 70 to 82 shows a compositional bias: basic and acidic residues; sequence EDAKTKNEEKDQG. The interval 70 to 92 is disordered; sequence EDAKTKNEEKDQGQPKTPLNEGK.

It belongs to the PKI family.

Its function is as follows. Extremely potent competitive inhibitor of cAMP-dependent protein kinase activity, this protein interacts with the catalytic subunit of the enzyme after the cAMP-induced dissociation of its regulatory chains. This chain is cAMP-dependent protein kinase inhibitor beta (Pkib), found in Mus musculus (Mouse).